Reading from the N-terminus, the 699-residue chain is Homeobox-leucine zipper protein HDG8 (699 aa).

Residues 1-31 (MDNNGGGSSGNEQYTSGDAKQNGKRTCHRHT) are disordered. Over residues 10–19 (GNEQYTSGDA) the composition is skewed to polar residues. Residues 22-31 (NGKRTCHRHT) show a composition bias toward basic residues. Positions 23 to 82 (GKRTCHRHTPQQIQRLEAYFKECPHPDERQRNQLCRELKLEPDQIKFWFQNKRTQSKTQE) form a DNA-binding region, homeobox. A coiled-coil region spans residues 89 to 149 (LLRGENETLQ…LKDHRDRISN (61 aa)). The START domain maps to 204 to 438 (AETDMSLLSE…LERMCERMAL (235 aa)).

Belongs to the HD-ZIP homeobox family. Class IV subfamily. In terms of assembly, interacts with ANT. As to expression, expressed in the embryo at early stage and in the endosperm.

The protein resides in the nucleus. Probable transcription factor. In Arabidopsis thaliana (Mouse-ear cress), this protein is Homeobox-leucine zipper protein HDG8.